We begin with the raw amino-acid sequence, 342 residues long: S-adenosyl-L-methionine-dependent tRNA 4-demethylwyosine synthase (342 aa).

6 residues coordinate [4Fe-4S] cluster: cysteine 45, cysteine 58, cysteine 71, cysteine 81, cysteine 85, and cysteine 88. A Radical SAM core domain is found at 64-312; the sequence is YGIHSHRCLQ…VKHLPGYHIE (249 aa).

Belongs to the TYW1 family. As to quaternary structure, monomer. Requires [4Fe-4S] cluster as cofactor.

It is found in the cytoplasm. The enzyme catalyses N(1)-methylguanosine(37) in tRNA(Phe) + pyruvate + S-adenosyl-L-methionine = 4-demethylwyosine(37) in tRNA(Phe) + 5'-deoxyadenosine + L-methionine + CO2 + H2O. Component of the wyosine derivatives biosynthesis pathway that catalyzes the condensation of N-methylguanine with 2 carbon atoms from pyruvate to form the tricyclic 4-demethylwyosine (imG-14) on guanosine-37 of tRNA(Phe). This Pyrococcus abyssi (strain GE5 / Orsay) protein is S-adenosyl-L-methionine-dependent tRNA 4-demethylwyosine synthase.